We begin with the raw amino-acid sequence, 576 residues long: MFRFVGRSGFALRGSLQLRKDVLRSRTTAVAKRHYSSSNGNNGGGFSSAILSVLGGSLIGGGFVAYALGSQFEKEKSVSDLSIARLEDLDSPEYCDKETFAKALVELKDVLENDPENFTVAKDDLDAHSDTYFNSHHAEANQRPEIVLYPRNTEDVSKLLKICHKYSIPVIPFSGGTSLEGHFLPTRPGSCVVLDISKYLNKIIQLNKEDLDVVVQGGVPWEELNEYLNDHGLLFGCDPGPGAQIAGCIANSCSGTNAYRYGTMKENVVNITMCMADGTIVKTKRRPRKSSAGYNLNGLIIGSEGTLGIVTEATIKCHVRSTFETVAVVPFPTVSDAASCSSHLIQAGIQLNAMELLDDNMMKIINQSGATSKDNWVESPTLFFKIGGRSEQIIQEVIKEVEKIASQHNNTKFEFATDEDSKLELWEARKVALWSTIDTGRKTNPDANIWTTDVAVPISKFADVINATKEEMNASGLLTSLVGHAGDGNFHAFIIYNTEQRKTAETIVENMVKRAIDAEGTCTGEHGVGIGKRDYLLEEVGEDTVAVMRKLKLALDPKRILNPDKIFKIDPNDHQH.

The region spanning Glu-139–Arg-320 is the FAD-binding PCMH-type domain.

This sequence belongs to the FAD-binding oxidoreductase/transferase type 4 family. FAD serves as cofactor. Zn(2+) is required as a cofactor.

The protein resides in the mitochondrion matrix. The catalysed reaction is (R)-lactate + 2 Fe(III)-[cytochrome c] = 2 Fe(II)-[cytochrome c] + pyruvate + 2 H(+). In terms of biological role, catalyzes the stereospecific oxidation of D-lactate to pyruvate. This chain is D-lactate dehydrogenase [cytochrome], mitochondrial (DLD1), found in Kluyveromyces lactis (strain ATCC 8585 / CBS 2359 / DSM 70799 / NBRC 1267 / NRRL Y-1140 / WM37) (Yeast).